The following is a 248-amino-acid chain: Probable transcriptional regulatory protein Nwi_2729 (248 aa).

The interval 1–21 (MAGHSQFKNIMHRKGRQDAQK) is disordered.

This sequence belongs to the TACO1 family.

Its subcellular location is the cytoplasm. In Nitrobacter winogradskyi (strain ATCC 25391 / DSM 10237 / CIP 104748 / NCIMB 11846 / Nb-255), this protein is Probable transcriptional regulatory protein Nwi_2729.